The following is a 443-amino-acid chain: MSKTLYQKIYDSHVVYEDKNSTSILYIDLHLLHEVTSPQAFDSLRNKQRTVRQSKKTFATMDHNVSTKIQNISASGSMAQKQMEQLIQNCQEFNIPLYDINNPHQGIVHVIAPEKGMTLPGMTIVCGDSHTSTHGAFGALAFGIGTSEVEHVLATQTLKQKRFKNMKIEIIGKIPRFVTAKDIILFIIGKLGSSSGTGHVIEFCGDVIRNMSMEERMTICNMAIEMGAKSGLIAPDEITYSYLKNKIYSPSGLFWQKSLDYWKLLKSDHNAHYDKCFTVNISNLAPQITWGTNLDQVISIDEKIPDFNDVNSTIKKDSAKSACEYMGLKSNTYLTNISIDKVFIGSCTNARIEDLRSAAGILKNKKIAKHVQAIVVPGSGSVKRQAEREGLDKIFIDSGFEWRLPGCSMCLGMNKDRLNFGERCASXSNRNFEGRQGRGGRTH.

Cys-347, Cys-407, and Cys-410 together coordinate [4Fe-4S] cluster.

It belongs to the aconitase/IPM isomerase family. LeuC type 1 subfamily. As to quaternary structure, heterodimer of LeuC and LeuD. [4Fe-4S] cluster serves as cofactor.

It carries out the reaction (2R,3S)-3-isopropylmalate = (2S)-2-isopropylmalate. Its pathway is amino-acid biosynthesis; L-leucine biosynthesis; L-leucine from 3-methyl-2-oxobutanoate: step 2/4. Its function is as follows. Catalyzes the isomerization between 2-isopropylmalate and 3-isopropylmalate, via the formation of 2-isopropylmaleate. The chain is 3-isopropylmalate dehydratase large subunit from Buchnera aphidicola subsp. Uroleucon sonchi.